We begin with the raw amino-acid sequence, 118 residues long: Turripeptide NCR-01 (118 aa).

An N-terminal signal peptide occupies residues 1–16 (MLRLILAVALVAACLA). The segment at 63 to 118 (QGFQGFLPQPHQKRDSYQHGGYQHQQSFDNFQGSGGMNNDNSDDSFALRNFNNDGY) is disordered. Polar residues predominate over residues 85–102 (QHQQSFDNFQGSGGMNND).

As to expression, expressed by the venom duct.

The protein localises to the secreted. In Gemmula speciosa (Splendid gem-turris), this protein is Turripeptide NCR-01.